A 261-amino-acid chain; its full sequence is uncharacterized protein (261 aa).

The protein localises to the plastid. The protein resides in the chloroplast. This is an uncharacterized protein from Mesostigma viride (Green alga).